The primary structure comprises 448 residues: Binary larvicide subunit BinB (448 aa).

The tract at residues 1 to 198 is beta-trefoil domain; that stretch reads MCDSKDNSGV…TAFVNSSFYA (198 aa). Cys-67 and Cys-161 form a disulfide bridge. Residues 199–448 form a probable pore-forming domain region; that stretch reads AAIPQLPQTS…NEELIPKINQ (250 aa).

This sequence belongs to the toxin_10 family. Forms a heterodimer with BinA. Upon toxin crystal solubilization with NaOH at pH 12, only the 63-kDa (binB) and 43-kDa (binA) proteins were detected. Interacts with mosquito protein Cpm1 which acts as its host receptor. Processed by proteases extracted from C.pipiens larval gut; unlike its partner BinA, it does not form a stable digestion product.

The protein localises to the spore. It is found in the perispore. Functionally, component of a binary toxin active against Culex and some Aedes mosquito larvae. This subunit alone has no toxic larvicidal activity. This subunit is responsible for localized binding to specific regions of the host larval gut. Binary toxin internalization into host gut cells requires both proteins. In Lysinibacillus sphaericus (Bacillus sphaericus), this protein is Binary larvicide subunit BinB (binB).